Reading from the N-terminus, the 218-residue chain is Ras-related protein Rab-4A (218 aa).

9 residues coordinate GTP: G23, T24, G25, K26, S27, C28, S42, H44, and T45. S27 serves as a coordination point for Mg(2+). Positions 44–49 (HTIGVE) match the Switch 1 motif. Mg(2+) contacts are provided by T45 and D68. The Switch 2 signature appears at 70–79 (AGQERFRSVT). G71 contributes to the GTP binding site. The residue at position 72 (Q72) is a 5-glutamyl serotonin. N126, K127, D129, A157, and L158 together coordinate GTP. The residue at position 190 (S190) is a Phosphoserine. The residue at position 204 (S204) is a Phosphoserine; by CDK1. 2 S-geranylgeranyl cysteine lipidation sites follow: C216 and C218. A Cysteine methyl ester modification is found at C218.

The protein belongs to the small GTPase superfamily. Rab family. In terms of assembly, interacts with SGSM1, SGSM2 and SGSM3. Interacts with RAB11FIP1, RABEP1, ZFYVE20 and RUFY1. Interacts (membrane-bound form) with NDRG1; the interaction involves NDRG1 in vesicular recycling of E-cadherin. Interacts (in GTP-bound form) with GRIPAP1 (via N-terminus). Interacts with RABEP1 and RBSN. Does not interact with HPS4. Interacts with RABEP2; this interaction may mediate VEGFR2 cell surface expression. The cofactor is Mg(2+). Post-translationally, serotonylation of Gln-72 by TGM2 during activation and aggregation of platelets leads to constitutive activation of GTPase activity. In terms of processing, phosphorylated by CDK1 kinase during mitosis.

The protein resides in the membrane. Its subcellular location is the cytoplasm. It is found in the early endosome membrane. The protein localises to the recycling endosome membrane. It catalyses the reaction GTP + H2O = GDP + phosphate + H(+). Regulated by guanine nucleotide exchange factors (GEFs) which promote the exchange of bound GDP for free GTP. Regulated by GTPase activating proteins (GAPs) which increase the GTP hydrolysis activity. Inhibited by GDP dissociation inhibitors (GDIs). Functionally, the small GTPases Rab are key regulators of intracellular membrane trafficking, from the formation of transport vesicles to their fusion with membranes. Rabs cycle between an inactive GDP-bound form and an active GTP-bound form that is able to recruit to membranes different sets of downstream effectors directly responsible for vesicle formation, movement, tethering and fusion. RAB4A is involved in protein transport. Also plays a role in vesicular traffic. Mediates VEGFR2 endosomal trafficking to enhance VEGFR2 signaling. Acts as a regulator of platelet alpha-granule release during activation and aggregation of platelets. The chain is Ras-related protein Rab-4A from Rattus norvegicus (Rat).